Reading from the N-terminus, the 485-residue chain is DNA polymerase subunit gamma-2 (485 aa).

Residues R28–E67 are disordered.

In terms of assembly, heterotrimer composed of a catalytic subunit and a homodimer of accessory subunits (POLG:POLG2).

The protein localises to the mitochondrion. It is found in the mitochondrion matrix. The protein resides in the mitochondrion nucleoid. Its function is as follows. Accessory subunit of DNA polymerase gamma solely responsible for replication of mitochondrial DNA (mtDNA). Acts as an allosteric regulator of the holoenzyme activities. Enhances the polymerase activity and the processivity of POLG by increasing its interactions with the DNA template. Suppresses POLG exonucleolytic proofreading especially toward homopolymeric templates bearing mismatched termini. Binds to single-stranded DNA. In Bos taurus (Bovine), this protein is DNA polymerase subunit gamma-2 (POLG2).